Consider the following 310-residue polypeptide: Ceramide synthase LOH1 (310 aa).

6 helical membrane passes run 16 to 36, 85 to 105, 131 to 151, 157 to 177, 216 to 236, and 260 to 280; these read SFPT…FPTI, CIYY…EPWF, FLYM…VFWE, FGVS…SYIC, FVLF…FWIL, and YMFN…WVLI. In terms of domain architecture, TLC spans 76–289; sequence RKFKESAWKC…IYRMLVKQVQ (214 aa). Phosphoserine is present on residues S300 and S302.

In terms of tissue distribution, expressed ubiquitously at high levels. Not observed in pollen.

The protein resides in the endoplasmic reticulum membrane. The enzyme catalyses (4R)-hydroxysphinganine + a fatty acyl-CoA = an N-acyl-(4R)-4-hydroxysphinganine + CoA + H(+). The catalysed reaction is hexacosanoyl-CoA + (4R)-hydroxysphinganine = N-hexacosanoyl-(4R)-hydroxysphinganine + CoA + H(+). It carries out the reaction tetracosanoyl-CoA + (4R)-hydroxysphinganine = N-tetracosanoyl-(4R)-hydroxysphinganine + CoA + H(+). It functions in the pathway sphingolipid metabolism. Inhibited by the mycotoxin fumonisin B(1), a sphingosine analog mycotoxins produced by pathogenic fungi. Repressed by divalent cation such as magnesium Mg(2+), copper Cu(2+), zinc Zn(2+), manganese Mn(2+), calcium Ca(2+) and cobalt Co(2+). In terms of biological role, essential for plant growth, promotes cell division in root meristems. Catalyzes the biosynthesis of ceramide sphingolipids with C(16) to C(28) fatty acids, structural membrane lipids involved in membrane trafficking (e.g. early endosomes) and cell polarity (e.g. polar auxin transport related proteins); mostly active with t18:0 and saturated very long saturated fatty acids (C24:0 and C26:0), such as long-chain base (LCB) phytosphingosine (t18:0), lignoceroyl- and hexacosanoyl-CoAs. Mediates resistance to sphinganine-analog mycotoxins (SAMs, e.g. fumonisin B(1)) by restoring the sphingolipid biosynthesis. Could salvage the transport of GPI-anchored proteins from the endoplasmic reticulum to the Golgi apparatus in ceramides-depleted cells after SAM exposure. May prevent precocious cell death by delaying PR1 accumulation during aging. Contributes to hypoxic conditions tolerance (e.g. submergences), especially in the dark, by promoting the formation of very-long-chain (VLC) ceramide species (22:1, 24:1 and 26:1) and of VLC unsaturated ceramides, which are modulating CTR1-mediated ethylene signaling leading to endoplasmic reticulum (ER)-to-nucleus translocation of EIN2 and EIN3. This Arabidopsis thaliana (Mouse-ear cress) protein is Ceramide synthase LOH1.